The sequence spans 279 residues: Zinc-finger homeodomain protein 1 (279 aa).

Residues 1 to 13 are compositionally biased toward acidic residues; it reads MDFDDHDDGDEEM. The disordered stretch occupies residues 1–47; it reads MDFDDHDDGDEEMPPMPVSSSYETPPQHGLAGGGMAPKPPGEIGSHV. The segment at 57–106 adopts a ZF-HD dimerization-type; degenerate zinc-finger fold; the sequence is YRECLKNHAVGIGGHAVDGCGEFMAAGEEGTIDALRCAACNCHRNFHRKE. The disordered stretch occupies residues 157–191; sequence AAAAAAGGHPQRPLALPSTSHSGRDDGDDLSGMVG. Positions 215 to 278 form a DNA-binding region, homeobox; sequence KKRFRTKFTQ…NNKHTLGKKL (64 aa).

In terms of assembly, homo- and heterodimer with other ZFHD proteins.

It is found in the nucleus. Its function is as follows. Putative transcription factor. This Oryza sativa subsp. indica (Rice) protein is Zinc-finger homeodomain protein 1 (ZHD1).